Here is a 209-residue protein sequence, read N- to C-terminus: Small ribosomal subunit protein uS4 (209 aa).

The Zn(2+) site is built by C9, C12, C26, and C31. The segment at 9–31 (CRLCRREGVKLYLKGERCYSPKC) adopts a C4-type zinc-finger fold. The S4 RNA-binding domain occupies 100–162 (RLDNVVYRLG…RNLELIRQNL (63 aa)).

This sequence belongs to the universal ribosomal protein uS4 family. As to quaternary structure, part of the 30S ribosomal subunit. Contacts protein S5. The interaction surface between S4 and S5 is involved in control of translational fidelity. Requires Zn(2+) as cofactor.

Functionally, one of the primary rRNA binding proteins, it binds directly to 16S rRNA where it helps nucleate assembly of the body and platform of the 30S subunit. The sequence is that of Small ribosomal subunit protein uS4 (rpsD) from Thermus thermophilus (strain ATCC BAA-163 / DSM 7039 / HB27).